The chain runs to 441 residues: Xaa-Pro dipeptidase (441 aa).

Residues Asp244, Asp255, His336, Glu381, and Glu420 each coordinate Mn(2+).

Belongs to the peptidase M24B family. Bacterial-type prolidase subfamily. The cofactor is Mn(2+).

It catalyses the reaction Xaa-L-Pro dipeptide + H2O = an L-alpha-amino acid + L-proline. In terms of biological role, splits dipeptides with a prolyl residue in the C-terminal position. The protein is Xaa-Pro dipeptidase of Xanthomonas campestris pv. campestris (strain B100).